We begin with the raw amino-acid sequence, 354 residues long: Guanine nucleotide-binding protein G(t) subunit alpha-3 (354 aa).

The tract at residues 1-26 (MGIGISSESKESAKRSKELEKKLQED) is disordered. A lipid anchor (N-myristoyl glycine) is attached at glycine 2. The segment covering 8 to 26 (ESKESAKRSKELEKKLQED) has biased composition (basic and acidic residues). The region spanning 32-354 (RTVKLLLLGA…KENLKDCGLF (323 aa)) is the G-alpha domain. A G1 motif region spans residues 35–48 (KLLLLGAGESGKST). GTP contacts are provided by residues 40–47 (GAGESGKS), 175–181 (LHSRVKT), 200–204 (DVGGQ), 269–272 (NKKD), and alanine 326. Mg(2+)-binding residues include serine 47 and threonine 181. A G2 motif region spans residues 173–181 (DVLHSRVKT). The interval 196–205 (FRMFDVGGQR) is G3 motif. Residues 265–272 (VLFLNKKD) are G4 motif. The interval 324 to 329 (TCATDT) is G5 motif.

Belongs to the G-alpha family. G(i/o/t/z) subfamily. G proteins are composed of 3 units; alpha, beta and gamma, respectively GNAT3, GNB1 and GNG13 for Gustducin heterotrimer for bitter taste transduction. The alpha chain contains the guanine nucleotide binding site. Component of the TAS2R14-GNAT3 complex, consisting of TAS2R14, GNAT3, GNB1 and GNG2; within the complex interacts with TAS2R14; this complex plays a role in the perception of bitterness. Gustducin heterotrimer may also be composed of GNAT3, GNB3 and GNG13. Expressed in epithelial cells of taste buds of the circumvallate, foliate and fungiform. Detected in various region of the respiratory track. Expressed also in spermatozoa.

The protein resides in the cytoplasm. Functionally, guanine nucleotide-binding protein (G protein) alpha subunit playing a prominent role in bitter and sweet taste transduction as well as in umami (monosodium glutamate, monopotassium glutamate, and inosine monophosphate) taste transduction. The sequence is that of Guanine nucleotide-binding protein G(t) subunit alpha-3 (GNAT3) from Bos taurus (Bovine).